Here is a 69-residue protein sequence, read N- to C-terminus: Conopeptide Y-Pl1 (69 aa).

Residues 1–20 (MSKLGVVLFVFLLLLPLAAP) form the signal peptide. The propeptide occupies 21-69 (QPVGDQPADQPADRNAEARARFLHPFQYYTLYRYLTRFLHRYPIYYIRY).

Belongs to the conotoxin M superfamily. Conopeptide Y family. As to expression, expressed by the venom duct.

The protein localises to the secreted. Its function is as follows. Tyrosine-rich conopeptide that targets several channels/receptors that are expressed in Xenopus oocytes. These targets are the voltage-gated potassium channels Kv1.6/KCNA6 (IC(50) is 170 nM) and Kv1.2/KCNA2 (IC(50) is 2.0 uM), Nav1.2/SCN2A (30% of inhibition), and N-methyl-D-aspartate (NMDA) receptor (GRIN1/GRIN2A/GRIN3B and GRIN1/GRIN2B/GRIN3B) (15% of inhibition). In vivo, causes the marine worm N.virens to move very slowly in contrast to control worms, and causes seizures (at 5 nmol) and death (20 nmol) to mice when intracranially injected. This is Conopeptide Y-Pl1 from Conus planorbis (Planorbis cone).